We begin with the raw amino-acid sequence, 495 residues long: Dipeptide and tripeptide permease B (495 aa).

Over M1 to M16 the chain is Cytoplasmic. Residues I17 to V37 traverse the membrane as a helical segment. Residues Y38–S50 lie on the Periplasmic side of the membrane. The chain crosses the membrane as a helical span at residues F51–V71. Topologically, residues G72 to R80 are cytoplasmic. The helical transmembrane segment at T81–L101 threads the bilayer. Residues N102 to N104 lie on the Periplasmic side of the membrane. The helical transmembrane segment at F105–S125 threads the bilayer. Residues S126–T144 are Cytoplasmic-facing. A helical membrane pass occupies residues L145 to A165. The Periplasmic portion of the chain corresponds to N166–Y170. Residues E171–L191 traverse the membrane as a helical segment. Over R192–K209 the chain is Cytoplasmic. A helical membrane pass occupies residues T210–L230. A topological domain (periplasmic) is located at residue Q231. Residues N232–L252 traverse the membrane as a helical segment. Topologically, residues K253–K265 are cytoplasmic. Residues M266–M286 form a helical membrane-spanning segment. Residues P287–P309 lie on the Periplasmic side of the membrane. Residues V310–L330 traverse the membrane as a helical segment. At Y331 to T348 the chain is on the cytoplasmic side. A helical transmembrane segment spans residues V349 to A369. At D370–G373 the chain is on the periplasmic side. A helical transmembrane segment spans residues M374 to I394. Residues S395–R409 are Cytoplasmic-facing. Residues L410–G430 form a helical membrane-spanning segment. Residues Y431–E454 lie on the Periplasmic side of the membrane. A helical transmembrane segment spans residues L455–P475. The Cytoplasmic segment spans residues K476 to P495.

It belongs to the major facilitator superfamily. Proton-dependent oligopeptide transporter (POT/PTR) (TC 2.A.17) family. DtpB subfamily.

The protein localises to the cell inner membrane. In terms of biological role, proton-dependent permease that transports di- and tripeptides. This is Dipeptide and tripeptide permease B from Aliivibrio fischeri (strain MJ11) (Vibrio fischeri).